A 319-amino-acid chain; its full sequence is Lipoyl synthase (319 aa).

Residues 1-24 (MAVVIDTVGARPRHPEKQANPDTP) form a disordered region. The span at 13-24 (RHPEKQANPDTP) shows a compositional bias: basic and acidic residues. Positions 58, 63, 69, 84, 88, 91, and 298 each coordinate [4Fe-4S] cluster. The region spanning 70–287 (WDKSHATFMI…EEIARAKGFL (218 aa)) is the Radical SAM core domain.

It belongs to the radical SAM superfamily. Lipoyl synthase family. [4Fe-4S] cluster serves as cofactor.

It is found in the cytoplasm. It carries out the reaction [[Fe-S] cluster scaffold protein carrying a second [4Fe-4S](2+) cluster] + N(6)-octanoyl-L-lysyl-[protein] + 2 oxidized [2Fe-2S]-[ferredoxin] + 2 S-adenosyl-L-methionine + 4 H(+) = [[Fe-S] cluster scaffold protein] + N(6)-[(R)-dihydrolipoyl]-L-lysyl-[protein] + 4 Fe(3+) + 2 hydrogen sulfide + 2 5'-deoxyadenosine + 2 L-methionine + 2 reduced [2Fe-2S]-[ferredoxin]. Its pathway is protein modification; protein lipoylation via endogenous pathway; protein N(6)-(lipoyl)lysine from octanoyl-[acyl-carrier-protein]: step 2/2. Catalyzes the radical-mediated insertion of two sulfur atoms into the C-6 and C-8 positions of the octanoyl moiety bound to the lipoyl domains of lipoate-dependent enzymes, thereby converting the octanoylated domains into lipoylated derivatives. This is Lipoyl synthase from Phenylobacterium zucineum (strain HLK1).